A 262-amino-acid polypeptide reads, in one-letter code: Tritrans,polycis-undecaprenyl-diphosphate synthase (geranylgeranyl-diphosphate specific) (262 aa).

The active site involves Asp-40. Asp-40 is a binding site for Mg(2+). Substrate-binding positions include 41–44 (GNRR), Trp-45, and 85–87 (STE). Asn-88 acts as the Proton acceptor in catalysis. Substrate is bound by residues Arg-92, Arg-211, and 217–219 (RIS). Residue Glu-230 participates in Mg(2+) binding.

Belongs to the UPP synthase family. As to quaternary structure, homodimer. Mg(2+) serves as cofactor.

It carries out the reaction geranylgeranyl diphosphate + 7 isopentenyl diphosphate = tri-trans,hepta-cis-undecaprenyl diphosphate + 7 diphosphate. Functionally, catalyzes the sequential condensation of isopentenyl diphosphate (IPP) with geranylgeranyl diphosphate (GGPP) to yield (2Z,6Z,10Z,14Z,18Z,22Z,26Z,30E,34E,38E)-undecaprenyl diphosphate (tritrans,heptacis-UPP). It is probably the precursor of glycosyl carrier lipids. In Sulfurisphaera tokodaii (strain DSM 16993 / JCM 10545 / NBRC 100140 / 7) (Sulfolobus tokodaii), this protein is Tritrans,polycis-undecaprenyl-diphosphate synthase (geranylgeranyl-diphosphate specific).